The following is a 364-amino-acid chain: Probable endopolygalacturonase B (364 aa).

An N-terminal signal peptide occupies residues 1-20; it reads MHFFQSSLVAATMGAALVAA. The propeptide occupies 21–29; sequence APAADLETR. A disulfide bridge connects residues cysteine 32 and cysteine 47. Residues asparagine 138 and asparagine 141 are each glycosylated (N-linked (GlcNAc...) asparagine). PbH1 repeat units lie at residues 159–188, 189–210, 211–231, 240–261, 269–291, and 303–324; these read SDHLTIKDVLLDNSAGTKLGHNTDAFDVGS, STYITIDGATVYNQDDCLAVNS, GEHITFTNGYCNGGHGLSIGS, VNDVTISNSQVINSQNGARIKT, VTGVKFQDISLKGITKYGIVVQQ, and TNGVKVSDITFEKVTGTVTSSA. The active-site Proton donor is the aspartate 203. A disulfide bridge links cysteine 205 with cysteine 221. Histidine 225 is a catalytic residue. The cysteines at positions 331 and 336 are disulfide-linked. N-linked (GlcNAc...) asparagine glycosylation is present at asparagine 338. Cysteine 355 and cysteine 364 are disulfide-bonded.

The protein belongs to the glycosyl hydrolase 28 family.

Its subcellular location is the secreted. The catalysed reaction is (1,4-alpha-D-galacturonosyl)n+m + H2O = (1,4-alpha-D-galacturonosyl)n + (1,4-alpha-D-galacturonosyl)m.. Its function is as follows. Involved in maceration and soft-rotting of plant tissue. Hydrolyzes the 1,4-alpha glycosidic bonds of de-esterified pectate in the smooth region of the plant cell wall. The protein is Probable endopolygalacturonase B (pgaB) of Aspergillus fumigatus (strain CBS 144.89 / FGSC A1163 / CEA10) (Neosartorya fumigata).